A 211-amino-acid chain; its full sequence is PITH domain-containing protein CG6153 (211 aa).

The region spanning 20-192 (DHALEMGIEY…GVTICNYESR (173 aa)) is the PITH domain.

It belongs to the PITHD1 family.

The polypeptide is PITH domain-containing protein CG6153 (Drosophila melanogaster (Fruit fly)).